The following is a 350-amino-acid chain: Sulfate/thiosulfate import ATP-binding protein cysA (350 aa).

Residues 3 to 237 (IEVRNLSKRF…PATPFVYGFL (235 aa)) form the ABC transporter domain. 35–42 (GPSGCGKT) is a binding site for ATP.

This sequence belongs to the ABC transporter superfamily. Sulfate/tungstate importer (TC 3.A.1.6) family.

The protein localises to the mitochondrion. It catalyses the reaction sulfate(out) + ATP + H2O = sulfate(in) + ADP + phosphate + H(+). The catalysed reaction is thiosulfate(out) + ATP + H2O = thiosulfate(in) + ADP + phosphate + H(+). Functionally, part of the ABC transporter complex involved in sulfate/thiosulfate import. Responsible for energy coupling to the transport system. This is Sulfate/thiosulfate import ATP-binding protein cysA (CYSA) from Cucumis sativus (Cucumber).